A 402-amino-acid chain; its full sequence is Adenylyltransferase and sulfurtransferase MOCS3 (402 aa).

ATP contacts are provided by residues Gly47, Asp68, 75–79 (DNLHR), Lys92, and 136–137 (DN). The Zn(2+) site is built by Cys178 and Cys181. Cys195 functions as the Glycyl thioester intermediate; for adenylyltransferase activity in the catalytic mechanism. Zn(2+) contacts are provided by Cys253 and Cys256. A Rhodanese domain is found at 303–400 (AARKQFLLDT…WALKINDEFP (98 aa)). Cys359 serves as the catalytic Cysteine persulfide intermediate; for sulfurtransferase activity.

It in the N-terminal section; belongs to the HesA/MoeB/ThiF family. UBA4 subfamily. Requires Zn(2+) as cofactor.

The protein resides in the cytoplasm. Its subcellular location is the cytosol. It carries out the reaction [molybdopterin-synthase sulfur-carrier protein]-C-terminal Gly-Gly + ATP + H(+) = [molybdopterin-synthase sulfur-carrier protein]-C-terminal Gly-Gly-AMP + diphosphate. The catalysed reaction is [molybdopterin-synthase sulfur-carrier protein]-C-terminal Gly-Gly-AMP + S-sulfanyl-L-cysteinyl-[cysteine desulfurase] + AH2 = [molybdopterin-synthase sulfur-carrier protein]-C-terminal-Gly-aminoethanethioate + L-cysteinyl-[cysteine desulfurase] + A + AMP + 2 H(+). Its pathway is tRNA modification; 5-methoxycarbonylmethyl-2-thiouridine-tRNA biosynthesis. The protein operates within cofactor biosynthesis; molybdopterin biosynthesis. In terms of biological role, plays a central role in 2-thiolation of mcm(5)S(2)U at tRNA wobble positions of cytosolic tRNA(Lys), tRNA(Glu) and tRNA(Gln). Also essential during biosynthesis of the molybdenum cofactor. Acts by mediating the C-terminal thiocarboxylation of sulfur carriers URM1 and MOCS2A. Its N-terminus first activates URM1 and MOCS2A as acyl-adenylates (-COAMP), then the persulfide sulfur on the catalytic cysteine is transferred to URM1 and MOCS2A to form thiocarboxylation (-COSH) of their C-terminus. The reaction probably involves hydrogen sulfide that is generated from the persulfide intermediate and that acts as a nucleophile towards URM1 and MOCS2A. Subsequently, a transient disulfide bond is formed. Does not use thiosulfate as sulfur donor; NFS1 probably acting as a sulfur donor for thiocarboxylation reactions. This chain is Adenylyltransferase and sulfurtransferase MOCS3, found in Caenorhabditis briggsae.